A 257-amino-acid polypeptide reads, in one-letter code: Type III pantothenate kinase (257 aa).

5–12 provides a ligand contact to ATP; that stretch reads DIGNTNIK. 107–110 is a binding site for substrate; that stretch reads GSDR. Aspartate 109 (proton acceptor) is an active-site residue. Threonine 133 lines the ATP pocket.

Belongs to the type III pantothenate kinase family. As to quaternary structure, homodimer. The cofactor is NH4(+). Requires K(+) as cofactor.

It localises to the cytoplasm. The enzyme catalyses (R)-pantothenate + ATP = (R)-4'-phosphopantothenate + ADP + H(+). It participates in cofactor biosynthesis; coenzyme A biosynthesis; CoA from (R)-pantothenate: step 1/5. Functionally, catalyzes the phosphorylation of pantothenate (Pan), the first step in CoA biosynthesis. The sequence is that of Type III pantothenate kinase from Ehrlichia ruminantium (strain Gardel).